We begin with the raw amino-acid sequence, 234 residues long: Endonuclease NucS (234 aa).

Belongs to the NucS endonuclease family.

It is found in the cytoplasm. In terms of biological role, cleaves both 3' and 5' ssDNA extremities of branched DNA structures. This chain is Endonuclease NucS, found in Bifidobacterium adolescentis (strain ATCC 15703 / DSM 20083 / NCTC 11814 / E194a).